The following is a 278-amino-acid chain: Chitosanase (278 aa).

A signal peptide spans 1 to 40; it reads MHSQHRTARIALAVVLTAIPASLATAGVGYASTQASTAVK. Glu-62 functions as the Proton donor in the catalytic mechanism. Asp-80 functions as the Nucleophile in the catalytic mechanism.

It belongs to the glycosyl hydrolase 46 family.

It localises to the secreted. The enzyme catalyses Endohydrolysis of beta-(1-&gt;4)-linkages between D-glucosamine residues in a partly acetylated chitosan.. Aids in the defense against invading fungal pathogens by degrading their cell wall chitosan. The polypeptide is Chitosanase (csn) (Streptomyces sp. (strain N174)).